The chain runs to 120 residues: Guanidine hydrolase-activating protein A (120 aa).

Ni(2+) contacts are provided by H2, E3, and E41. Zn(2+) contacts are provided by C74, C77, C91, and C94.

This sequence belongs to the HypA/HybF family.

Involved in the maturation of the nickel-dependent guanidine hydrolase GdmH. Required for nickel insertion into the metal center of GdmH. Seems to be required only for GdmH activation and not for activity. This chain is Guanidine hydrolase-activating protein A, found in Synechocystis sp. (strain ATCC 27184 / PCC 6803 / Kazusa).